Here is a 398-residue protein sequence, read N- to C-terminus: DNA-directed RNA polymerase III subunit RPC4 (398 aa).

The disordered stretch occupies residues 1-149; the sequence is MSEGNAAGEP…IKKEKRETDE (149 aa). Ser2 carries the post-translational modification N-acetylserine. Residue Ser42 is modified to Phosphoserine. Composition is skewed to basic and acidic residues over residues 66–100, 116–128, and 140–149; these read KIKEEPKEEVTMKKEKRERDRDRQREGHGRGRGRP, MMKKKGNWDKTVD, and IKKEKRETDE. Glycyl lysine isopeptide (Lys-Gly) (interchain with G-Cter in SUMO2) cross-links involve residues Lys68 and Lys78. Omega-N-methylarginine is present on residues Arg95, Arg97, and Arg99. Glycyl lysine isopeptide (Lys-Gly) (interchain with G-Cter in SUMO2) cross-links involve residues Lys141, Lys152, Lys160, Lys190, Lys199, Lys206, Lys220, Lys285, Lys302, and Lys396. The tract at residues 191–244 is disordered; the sequence is EESEEPEAKPFSAGPKEEDMEVDVPAVKVKEEPRDEEEEAKVKAPPRAARKTPG.

This sequence belongs to the eukaryotic RPC4/POLR3D RNA polymerase subunit family. In terms of assembly, component of the RNA polymerase III complex consisting of 17 subunits: a ten-subunit horseshoe-shaped catalytic core composed of POLR3A/RPC1, POLR3B/RPC2, POLR1C/RPAC1, POLR1D/RPAC2, POLR3K/RPC10, POLR2E/RPABC1, POLR2F/RPABC2, POLR2H/RPABC3, POLR2K/RPABC4 and POLR2L/RPABC5; a mobile stalk composed of two subunits POLR3H/RPC8 and CRCP/RPC9, protruding from the core and functioning primarily in transcription initiation; and additional subunits homologous to general transcription factors of the RNA polymerase II machinery, POLR3C/RPC3-POLR3F/RPC6-POLR3G/RPC7 heterotrimer required for transcription initiation and POLR3D/RPC4-POLR3E/RPC5 heterodimer involved in both transcription initiation and termination. Sumoylation on Lys-141 can serve as a signal to mark misfolded Pol III for proteasomal degradation.

Its subcellular location is the nucleus. Functionally, DNA-dependent RNA polymerase catalyzes the transcription of DNA into RNA using the four ribonucleoside triphosphates as substrates. Specific peripheric component of RNA polymerase III (Pol III) which synthesizes small non-coding RNAs including 5S rRNA, snRNAs, tRNAs and miRNAs from at least 500 distinct genomic loci. Enables recruitment of Pol III at transcription initiation site and drives transcription initiation from both type 2 and type 3 DNA promoters. Required for efficient transcription termination and reinitiation. Pol III plays a key role in sensing and limiting infection by intracellular bacteria and DNA viruses. Acts as nuclear and cytosolic DNA sensor involved in innate immune response. Can sense non-self dsDNA that serves as template for transcription into dsRNA. The non-self RNA polymerase III transcripts, such as Epstein-Barr virus-encoded RNAs (EBERs) induce type I interferon and NF-kappa-B through the RIG-I pathway. This Mus musculus (Mouse) protein is DNA-directed RNA polymerase III subunit RPC4.